The following is an 846-amino-acid chain: DNA mismatch repair protein MutS (846 aa).

ATP is bound at residue 610 to 617 (GPNMGGKS).

The protein belongs to the DNA mismatch repair MutS family.

Its function is as follows. This protein is involved in the repair of mismatches in DNA. It is possible that it carries out the mismatch recognition step. This protein has a weak ATPase activity. The chain is DNA mismatch repair protein MutS from Legionella pneumophila (strain Paris).